The following is a 236-amino-acid chain: Methylosome subunit pICln (236 aa).

Position 2 is an N-acetylserine (Ser-2). Residues Ser-95, Ser-143, Ser-192, Ser-194, Ser-197, and Ser-209 each carry the phosphoserine modification. The interval Leu-134 to Gln-158 is disordered. A compositionally biased stretch (acidic residues) spans Pro-138–Asp-152. Position 222 is a phosphothreonine (Thr-222).

This sequence belongs to the pICln (TC 1.A.47) family. Component of the methylosome, a 20S complex containing at least PRMT5/SKB1, WDR77/MEP50 and CLNS1A/pICln. May mediate SNRPD1 and SNRPD3 methylation. Forms a 6S pICln-Sm complex composed of CLNS1A/pICln, SNRPD1, SNRPD2, SNRPE, SNRPF and SNRPG; ring-like structure where CLNS1A/pICln mimics additional Sm proteins and which is unable to assemble into the core snRNP. Interacts with LSM10 and LSM11. As to expression, expressed in most tissues.

The protein resides in the cytoplasm. It is found in the cytosol. The protein localises to the nucleus. It localises to the cytoskeleton. Involved in both the assembly of spliceosomal snRNPs and the methylation of Sm proteins. Chaperone that regulates the assembly of spliceosomal U1, U2, U4 and U5 small nuclear ribonucleoproteins (snRNPs), the building blocks of the spliceosome, and thereby plays an important role in the splicing of cellular pre-mRNAs. Most spliceosomal snRNPs contain a common set of Sm proteins SNRPB, SNRPD1, SNRPD2, SNRPD3, SNRPE, SNRPF and SNRPG that assemble in a heptameric protein ring on the Sm site of the small nuclear RNA to form the core snRNP (Sm core). In the cytosol, the Sm proteins SNRPD1, SNRPD2, SNRPE, SNRPF and SNRPG are trapped in an inactive 6S pICln-Sm complex by the chaperone CLNS1A that controls the assembly of the core snRNP. Dissociation by the SMN complex of CLNS1A from the trapped Sm proteins and their transfer to an SMN-Sm complex triggers the assembly of core snRNPs and their transport to the nucleus. The chain is Methylosome subunit pICln (Clns1a) from Rattus norvegicus (Rat).